We begin with the raw amino-acid sequence, 307 residues long: Protein TIPIN homolog (307 aa).

Disordered stretches follow at residues 1 to 50 (MASL…SQDA) and 252 to 279 (ASMDISDYGQPLPPSQPPTPAAKKLSNE). Positions 262 to 271 (PLPPSQPPTP) are enriched in pro residues.

It belongs to the CSM3 family.

The protein resides in the cytoplasm. Its subcellular location is the nucleus. In terms of biological role, required for normal progression of S-phase. Important for cell survival after DNA damage or replication stress. The protein is Protein TIPIN homolog of Drosophila melanogaster (Fruit fly).